Here is a 641-residue protein sequence, read N- to C-terminus: Packaging protein UL32 homolog (641 aa).

8 residues coordinate Zn(2+): Cys-101, Cys-104, His-181, Cys-187, Cys-467, Cys-470, His-540, and Cys-547. 2 zinc finger regions span residues 101–187 (CLVC…LHGC) and 467–547 (CLLC…DPMC).

This sequence belongs to the herpesviridae UL32 protein family.

It is found in the host cytoplasm. The protein localises to the host nucleus. In terms of biological role, plays a role in efficient localization of neo-synthesized capsids to nuclear replication compartments, thereby controlling cleavage and packaging of virus genomic DNA. In Gallus gallus (Chicken), this protein is Packaging protein UL32 homolog (MDV046).